A 273-amino-acid chain; its full sequence is Phosphate import ATP-binding protein PstB (273 aa).

The interval 1-20 is disordered; sequence MTTVSTAAASGPAVPPPRID. An ABC transporter domain is found at 27 to 268; that stretch reads VAARNLNFYY…PSDRRTQDYI (242 aa). 59–66 is a binding site for ATP; sequence GPSGCGKS.

The protein belongs to the ABC transporter superfamily. Phosphate importer (TC 3.A.1.7) family. As to quaternary structure, the complex is composed of two ATP-binding proteins (PstB), two transmembrane proteins (PstC and PstA) and a solute-binding protein (PstS).

The protein resides in the cell inner membrane. It carries out the reaction phosphate(out) + ATP + H2O = ADP + 2 phosphate(in) + H(+). Its function is as follows. Part of the ABC transporter complex PstSACB involved in phosphate import. Responsible for energy coupling to the transport system. The polypeptide is Phosphate import ATP-binding protein PstB (Nitrobacter winogradskyi (strain ATCC 25391 / DSM 10237 / CIP 104748 / NCIMB 11846 / Nb-255)).